We begin with the raw amino-acid sequence, 901 residues long: MLIKLLTKVFGSRNDRTLRRMRKAVTVINAMEPEMEKLSDDELKAKTVEFRARLDKGETVESLIPEAFAVVREASKRVFGMRHFDVQLLGGMVLNERCIAEMRTGEGKTLTATLPAYLNALSGKGVHVVTVNDYLAQRDAENNRPLFEFLGMSVGINMSGLPAPAKREAYGADITYGTNNEYGFDYLRDNMAFSPEERVQRKLHYALVDEVDSILIDEARTPLIISGPAEDSSDMYRKVDKIIPHLIRQEKEDSDTFQGEGHFSVDEKARQVNLTERGLIQIEELLVEQGIMEEGESLYSPTNIMLMHHVTAALRAHALFTRDVDYIVKDGEVIIVDEHTGRTMQGRRWSDGLHQAVEAKEGVDIQNENQTLASITFQNYFRLYEKLAGMTGTADTEAFEFSSIYKLDTVVVPTNRPMIRKDMPDLVYMTEAEKIQAIIEDIRERTAAGQPVLVGTISIEKSEVVSHELEKAGIKHNVLNAKFHAKEADIVAQAGYPAAVTIATNMAGRGTDIVLGGSWQSELAELENPTPEQIAQVKADWQVRHDAVLASGGLHIIGTERHESRRIDNQLRGRAGRQGDAGSSRFYLSMEDALMRIFASDRVSGMMRKLGMKPGEAIEHPWVTKAIANAQRKVESRNFDIRKQLLEYDDVANDQRRAIYTQRNELLDVTDVSETINSIREDVFKATIDAYIPPQSLEEMWDVEGLQERLKNDFDLELPVKEWLDKEPELHEETLRERILENAIEVYKRKEEVVGTEMMRHFEKGVMLQTLDSLWKEHLAAMDYLRQGIHLRGYAQKDPKQEYKRESFAMFATMLESLKYEVISTLGKVQVRMPEEVEAMEQQRREEAERLAQMQQLSHQTDENEAAEAIAAQTGDRKVGRNDPCPCGSGKKYKSCHGRLS.

ATP contacts are provided by residues Q87, 105-109 (GEGKT), and D512. The disordered stretch occupies residues 853–901 (QMQQLSHQTDENEAAEAIAAQTGDRKVGRNDPCPCGSGKKYKSCHGRLS). Zn(2+)-binding residues include C885, C887, C896, and H897. Over residues 891–901 (KKYKSCHGRLS) the composition is skewed to basic residues.

It belongs to the SecA family. In terms of assembly, monomer and homodimer. Part of the essential Sec protein translocation apparatus which comprises SecA, SecYEG and auxiliary proteins SecDF-YajC and YidC. Zn(2+) serves as cofactor.

Its subcellular location is the cell inner membrane. The protein localises to the cytoplasm. The catalysed reaction is ATP + H2O + cellular proteinSide 1 = ADP + phosphate + cellular proteinSide 2.. Its function is as follows. Part of the Sec protein translocase complex. Interacts with the SecYEG preprotein conducting channel. Has a central role in coupling the hydrolysis of ATP to the transfer of proteins into and across the cell membrane, serving both as a receptor for the preprotein-SecB complex and as an ATP-driven molecular motor driving the stepwise translocation of polypeptide chains across the membrane. This Enterobacter sp. (strain 638) protein is Protein translocase subunit SecA.